The following is a 1070-amino-acid chain: Potassium/chloride cotransporter 3 (1070 aa).

15 consecutive transmembrane segments (helical) span residues 92–112, 114–134, 142–162, 174–194, 196–216, 228–248, 251–271, 400–420, 433–453, 473–493, 534–554, 557–577, 600–620, 791–811, and 827–847; these read GVML…TMFI, LFWV…AICC, ISLS…YFII, VGIL…VGGV, VILM…LHDT, LYGT…VKFV, LAPV…GGGI, FFML…GTNM, VGTI…AILF, TMVV…GAFL, PFLG…LGAV, IAEV…LIAV, LLGA…LACI, LVLF…LIVT, and FIDI…AYLL.

In terms of tissue distribution, expressed in the amphid sheath glia and the cephalic sheath glia. Also expressed in the inner labial and outer labial sheath and socket glia and as well as phasmid sheath glia.

It is found in the cell membrane. In terms of biological role, probable potassium/chloride cotransporter that functions in the amphid sheath glial cells to regulate thermotaxis behavior. By maintaining chloride homeostasis, negatively regulates guanylate cyclase gcy-8 in the thermosensory AFD neurons and thereby controls the microvilli receptive ending morphology of the AFD neurons and thermotaxis. Modulates the temperature-evoked neuronal activity of the AFD neurons such as calcium responses to temperature gradients. Might also play a role in the chemotaxis behavior mediated by the sensory neurons AWA and AWC. This Caenorhabditis elegans protein is Potassium/chloride cotransporter 3 (kcc-3).